The sequence spans 297 residues: Bifunctional protein FolD (297 aa).

NADP(+)-binding positions include 167–169 (GRS), S192, and I233.

This sequence belongs to the tetrahydrofolate dehydrogenase/cyclohydrolase family. As to quaternary structure, homodimer.

It carries out the reaction (6R)-5,10-methylene-5,6,7,8-tetrahydrofolate + NADP(+) = (6R)-5,10-methenyltetrahydrofolate + NADPH. The enzyme catalyses (6R)-5,10-methenyltetrahydrofolate + H2O = (6R)-10-formyltetrahydrofolate + H(+). Its pathway is one-carbon metabolism; tetrahydrofolate interconversion. In terms of biological role, catalyzes the oxidation of 5,10-methylenetetrahydrofolate to 5,10-methenyltetrahydrofolate and then the hydrolysis of 5,10-methenyltetrahydrofolate to 10-formyltetrahydrofolate. The protein is Bifunctional protein FolD of Caulobacter vibrioides (strain ATCC 19089 / CIP 103742 / CB 15) (Caulobacter crescentus).